A 196-amino-acid polypeptide reads, in one-letter code: Probable DNA-directed RNA polymerase subunit delta (196 aa).

An HTH HARE-type domain is found at 14 to 81; it reads LSMIEVAHEI…GDNVWGLRSW (68 aa). Residues 119-150 are compositionally biased toward acidic residues; it reads DDDDVIDYDDDDPEDEDLDNDYDDEDDDDDEG. The disordered stretch occupies residues 119–196; sequence DDDDVIDYDD…DADLDEENQD (78 aa). Residues 151–161 show a composition bias toward basic and acidic residues; that stretch reads SHELKQYTKDL. Acidic residues-rich tracts occupy residues 162–176 and 186–196; these read DDID…ELAD and SDADLDEENQD.

It belongs to the RpoE family. RNAP is composed of a core of 2 alpha, a beta and a beta' subunits. The core is associated with a delta subunit and one of several sigma factors.

In terms of biological role, participates in both the initiation and recycling phases of transcription. In the presence of the delta subunit, RNAP displays an increased specificity of transcription, a decreased affinity for nucleic acids, and an increased efficiency of RNA synthesis because of enhanced recycling. The polypeptide is Probable DNA-directed RNA polymerase subunit delta (Ligilactobacillus salivarius (strain UCC118) (Lactobacillus salivarius)).